We begin with the raw amino-acid sequence, 188 residues long: Inner membrane-spanning protein YciB (188 aa).

5 helical membrane-spanning segments follow: residues 23–43 (FQKA…IGYA), 49–69 (AMLP…GLIF), 73–93 (VFVK…LVGG), 116–133 (WRTL…VAII), and 149–169 (FRLA…PFMM).

This sequence belongs to the YciB family.

Its subcellular location is the cell inner membrane. In terms of biological role, plays a role in cell envelope biogenesis, maintenance of cell envelope integrity and membrane homeostasis. This chain is Inner membrane-spanning protein YciB, found in Caulobacter vibrioides (strain ATCC 19089 / CIP 103742 / CB 15) (Caulobacter crescentus).